The chain runs to 896 residues: Protein translocase subunit SecA (896 aa).

Residues Gln87, Gly105–Thr109, and Asp507 contribute to the ATP site. Residues Glu853–Pro879 are disordered. Residues Thr866–Arg876 are compositionally biased toward basic and acidic residues. Zn(2+) is bound by residues Cys880, Cys882, Cys891, and His892.

Belongs to the SecA family. Monomer and homodimer. Part of the essential Sec protein translocation apparatus which comprises SecA, SecYEG and auxiliary proteins SecDF-YajC and YidC. Zn(2+) is required as a cofactor.

The protein localises to the cell inner membrane. It is found in the cytoplasm. The enzyme catalyses ATP + H2O + cellular proteinSide 1 = ADP + phosphate + cellular proteinSide 2.. Its function is as follows. Part of the Sec protein translocase complex. Interacts with the SecYEG preprotein conducting channel. Has a central role in coupling the hydrolysis of ATP to the transfer of proteins into and across the cell membrane, serving both as a receptor for the preprotein-SecB complex and as an ATP-driven molecular motor driving the stepwise translocation of polypeptide chains across the membrane. This Legionella pneumophila (strain Corby) protein is Protein translocase subunit SecA.